A 375-amino-acid polypeptide reads, in one-letter code: Leucoanthocyanidin dioxygenase 1 (375 aa).

One can recognise a Fe2OG dioxygenase domain in the interval 218 to 317; sequence LLLQLKINYY…RLSWVVFCEP (100 aa). Residues histidine 242, aspartate 244, and histidine 298 each contribute to the Fe cation site. 2-oxoglutarate is bound at residue arginine 308.

The protein belongs to the iron/ascorbate-dependent oxidoreductase family. The cofactor is L-ascorbate. It depends on Fe(2+) as a cofactor.

The catalysed reaction is a (2R,3S,4S)-leucoanthocyanidin + 2-oxoglutarate + O2 = a 4-H-anthocyanidin with a 3-hydroxy group + succinate + CO2 + 2 H2O. The protein operates within pigment biosynthesis; anthocyanin biosynthesis. Functionally, involved in anthocyanin and protoanthocyanidin biosynthesis by catalyzing the oxidation of leucoanthocyanidins into anthocyanidins. This is Leucoanthocyanidin dioxygenase 1 from Oryza sativa subsp. japonica (Rice).